The sequence spans 405 residues: MVDPIRSPLSRAFAPVRALFVSDASAGILLILVAAAAMIVANSPLAGAYEEMFYGDLAWTPIAKLDDLHLWINDGLMAIFFFVVGLEVKRELICGQLSSPEQRTLPVLAAIAGMAVPAIVYVGVVGTDSALVRGWAIPAATDIAFAMGVLGLLGSRVPASLRLFLLTVAIVDDIGAVLVIAAFYTANLKVMWLVIALGIFGVMVGMNKFGVDRIWPYILVALVLWVAVLFSGVHATIAGVMAALTIPMRRKDGHSLLEKLEHGLAPWSAYLVVPIFGFANAGVNLSGMGLDAVLAPLPLAIAAGLVVGKQLGIFGIIVAAVKLGIAKAPANANWIEIWGVSILTGIGFTMSLFISGLAFTDSRLLIDEAKIGILGGSLISAILGYTILRLTTTHPEERPPQTVTP.

The next 11 helical transmembrane spans lie at 20–40 (FVSDASAGILLILVAAAAMIV), 68–88 (LHLWINDGLMAIFFFVVGLEV), 105–125 (LPVLAAIAGMAVPAIVYVGVV), 134–154 (GWAIPAATDIAFAMGVLGLLG), 163–183 (LFLLTVAIVDDIGAVLVIAAF), 186–206 (ANLKVMWLVIALGIFGVMVGM), 214–234 (IWPYILVALVLWVAVLFSGVH), 263–283 (GLAPWSAYLVVPIFGFANAGV), 301–321 (IAAGLVVGKQLGIFGIIVAAV), 334–354 (WIEIWGVSILTGIGFTMSLFI), and 371–391 (IGILGGSLISAILGYTILRLT).

It belongs to the NhaA Na(+)/H(+) (TC 2.A.33) antiporter family.

The protein localises to the cell inner membrane. The enzyme catalyses Na(+)(in) + 2 H(+)(out) = Na(+)(out) + 2 H(+)(in). Functionally, na(+)/H(+) antiporter that extrudes sodium in exchange for external protons. The protein is Na(+)/H(+) antiporter NhaA 1 of Erythrobacter litoralis (strain HTCC2594).